The chain runs to 352 residues: Putative killer cell immunoglobulin-like receptor-like protein KIR3DX1 (352 aa).

The N-terminal stretch at 1-16 (MAPKLITVLCLGFCLN) is a signal peptide. Ig-like C2-type domains are found at residues 17 to 112 (QKIC…NSLK) and 224 to 311 (PSLS…VTRC). 2 cysteine pairs are disulfide-bonded: cysteine 49-cysteine 94 and cysteine 244-cysteine 295. Residue asparagine 78 is glycosylated (N-linked (GlcNAc...) asparagine).

Expressed in NK-cells.

Its subcellular location is the secreted. This is Putative killer cell immunoglobulin-like receptor-like protein KIR3DX1 (KIR3DX1) from Homo sapiens (Human).